The following is a 71-amino-acid chain: Cytochrome c oxidase subunit 7, mitochondrial (71 aa).

The Mitochondrial matrix segment spans residues 1-35 (MPGLVNAPNHVPEKQRYYQQAFKNHTRLWKIGPRS). A helical transmembrane segment spans residues 36–58 (GIIMTTFNIAMWGTFGASMYAMS). At 59-71 (RKVLGYNTWFSED) the chain is on the mitochondrial intermembrane side.

The protein belongs to the cytochrome c oxidase VIIa family. In terms of assembly, component of the cytochrome c oxidase (complex IV, CIV), a multisubunit enzyme composed of 11 subunits. The complex is composed of a catalytic core of 3 subunits Cox1, Cox2 and Cox3, encoded in the mitochondrial DNA, and 8 supernumerary subunits Cox4, Cox5a/Cox5, Cox6, Cox7, Cox8, Cox7a/Cox9, Cox6b/Cox12 and Cox6a/Cox13, which are encoded in the nuclear genome. The complex exists as a monomer or a dimer and forms respiratory supercomplexes (SCs) in the inner mitochondrial membrane with NADH-ubiquinone oxidoreductase (complex I, CI) and ubiquinol-cytochrome c oxidoreductase (cytochrome b-c1 complex, complex III, CIII), resulting in various different assemblies (supercomplexes I(1)IV(1), I(1)III(3)IV(2), III(2)IV(1) and III(2)IV(2) as well as larger supercomplexes of compositions like I(1)III(2)IV(5-6)).

The protein localises to the mitochondrion inner membrane. The protein operates within energy metabolism; oxidative phosphorylation. Component of the cytochrome c oxidase, the last enzyme in the mitochondrial electron transport chain which drives oxidative phosphorylation. The respiratory chain contains 3 multisubunit complexes succinate dehydrogenase (complex II, CII), ubiquinol-cytochrome c oxidoreductase (cytochrome b-c1 complex, complex III, CIII) and cytochrome c oxidase (complex IV, CIV), that cooperate to transfer electrons derived from NADH and succinate to molecular oxygen, creating an electrochemical gradient over the inner membrane that drives transmembrane transport and the ATP synthase. Cytochrome c oxidase is the component of the respiratory chain that catalyzes the reduction of oxygen to water. Electrons originating from reduced cytochrome c in the intermembrane space (IMS) are transferred via the dinuclear copper A center (CU(A)) of Cox2 and heme A of Cox1 to the active site in Cox1, a binuclear center (BNC) formed by heme A3 and copper B (CU(B)). The BNC reduces molecular oxygen to 2 water molecules using 4 electrons from cytochrome c in the IMS and 4 protons from the mitochondrial matrix. This Neurospora crassa (strain ATCC 24698 / 74-OR23-1A / CBS 708.71 / DSM 1257 / FGSC 987) protein is Cytochrome c oxidase subunit 7, mitochondrial.